The sequence spans 750 residues: Photosystem I P700 chlorophyll a apoprotein A1 (750 aa).

Helical transmembrane passes span 70 to 93 (VFSA…FHGA), 156 to 179 (LYCT…FHYH), 195 to 219 (LNHH…HVSL), 291 to 309 (IAHH…GHMY), 346 to 369 (WHAQ…HHMY), 385 to 411 (LSLF…IFMV), 433 to 455 (AIIS…LYIH), and 531 to 549 (FLVH…LILL). The [4Fe-4S] cluster site is built by C573 and C582. The next 2 membrane-spanning stretches (helical) occupy residues 589-610 (HVFL…HFSW) and 664-686 (LSAY…MFLF). H675 lines the chlorophyll a' pocket. M683 and Y691 together coordinate chlorophyll a. A phylloquinone-binding site is contributed by W692. A helical transmembrane segment spans residues 724 to 744 (AVGVTHYLLGGIATTWAFFLA).

Belongs to the PsaA/PsaB family. In terms of assembly, the PsaA/B heterodimer binds the P700 chlorophyll special pair and subsequent electron acceptors. PSI consists of a core antenna complex that captures photons, and an electron transfer chain that converts photonic excitation into a charge separation. The eukaryotic PSI reaction center is composed of at least 11 subunits. Requires P700 is a chlorophyll a/chlorophyll a' dimer, A0 is one or more chlorophyll a, A1 is one or both phylloquinones and FX is a shared 4Fe-4S iron-sulfur center. as cofactor.

Its subcellular location is the plastid. It is found in the chloroplast thylakoid membrane. The catalysed reaction is reduced [plastocyanin] + hnu + oxidized [2Fe-2S]-[ferredoxin] = oxidized [plastocyanin] + reduced [2Fe-2S]-[ferredoxin]. PsaA and PsaB bind P700, the primary electron donor of photosystem I (PSI), as well as the electron acceptors A0, A1 and FX. PSI is a plastocyanin-ferredoxin oxidoreductase, converting photonic excitation into a charge separation, which transfers an electron from the donor P700 chlorophyll pair to the spectroscopically characterized acceptors A0, A1, FX, FA and FB in turn. Oxidized P700 is reduced on the lumenal side of the thylakoid membrane by plastocyanin. The protein is Photosystem I P700 chlorophyll a apoprotein A1 of Populus trichocarpa (Western balsam poplar).